Here is a 121-residue protein sequence, read N- to C-terminus: Protein yippee-like 5 (121 aa).

A Yippee domain is found at 13–110 (RLFSCANCDA…LERALVRESE (98 aa)). C17, C20, C73, and C76 together coordinate Zn(2+). The residue at position 118 (S118) is a Phosphoserine.

It belongs to the yippee family. In terms of assembly, identified in the CTLH complex that contains GID4, RANBP9 and/or RANBP10, MKLN1, MAEA, RMND5A (or alternatively its paralog RMND5B), GID8, ARMC8, WDR26 and YPEL5. Within this complex, MAEA, RMND5A (or alternatively its paralog RMND5B), GID8, WDR26, and RANBP9 and/or RANBP10 form the catalytic core, while GID4, MKLN1, ARMC8 and YPEL5 have ancillary roles. Interacts with RANBP9 and RANBP10.

The protein localises to the nucleus. It localises to the cytoplasm. Its subcellular location is the cytoskeleton. The protein resides in the microtubule organizing center. It is found in the centrosome. The protein localises to the spindle pole. It localises to the midbody. In terms of biological role, component of the CTLH E3 ubiquitin-protein ligase complex that selectively accepts ubiquitin from UBE2H and mediates ubiquitination and subsequent proteasomal degradation of the transcription factor HBP1. Required for normal cell proliferation. The protein is Protein yippee-like 5 (YPEL5) of Macaca fascicularis (Crab-eating macaque).